Consider the following 87-residue polypeptide: Small ribosomal subunit protein uS17 (87 aa).

This sequence belongs to the universal ribosomal protein uS17 family. As to quaternary structure, part of the 30S ribosomal subunit.

In terms of biological role, one of the primary rRNA binding proteins, it binds specifically to the 5'-end of 16S ribosomal RNA. The chain is Small ribosomal subunit protein uS17 from Geobacillus sp. (strain WCH70).